The primary structure comprises 119 residues: Probable cyclase otaY (119 aa).

It belongs to the aurE cyclase family.

The protein operates within mycotoxin biosynthesis. Probable cyclase; part of the gene cluster that mediates the biosynthesis of ochratoxin A (OTA), a mycotoxin composed of a chlorinated type I polyketide dihydroisocoumarin moiety linked to L-phenylalanine, and demonstrated to have nephrotoxic, immunotoxic, genotoxic, neurotoxic, and teratogenic properties. OtaY is probably involved in the polyketide cyclization. The pathway begins with the highly reducing polyketide synthase otaA that catalyzes the formation of the isocoumarin group during the initial stages of biosynthesis, starting from one acetate and 4 malonate units, to originate the characteristic pentaketide skeleton 7-methylmellein (7-MM) of the OTA molecule. The newly identified cyclase otaY might be involved in the polyketide cyclization reaction during the initial steps of the OTA biosynthesis. 7-MM is then oxidized into 7-carboxymellein (also called ochratoxin beta) by the cytochrome P450 monooxygenase otaC. The NRPS encoded by the otaB gene is involved in the linking of phenylalanine to the dihydroisocoumarin ring. The reaction catalyzed by NRPS results in the production of ochratoxin B (OTB), which is the non-chlorinated analog of OTA and which subsequently serves as the substrate of the halogenase otaD for chlorination activity to form the final molecular structure of OTA, containing a chlorine atom in the C-5 position of the molecule. The polypeptide is Probable cyclase otaY (Aspergillus niger (strain ATCC MYA-4892 / CBS 513.88 / FGSC A1513)).